The sequence spans 120 residues: Small ribosomal subunit protein uS11 (120 aa).

It belongs to the universal ribosomal protein uS11 family. As to quaternary structure, part of the 30S ribosomal subunit. Interacts with proteins S7 and S18. Binds to IF-3.

Functionally, located on the platform of the 30S subunit, it bridges several disparate RNA helices of the 16S rRNA. Forms part of the Shine-Dalgarno cleft in the 70S ribosome. This is Small ribosomal subunit protein uS11 from Neorickettsia sennetsu (strain ATCC VR-367 / Miyayama) (Ehrlichia sennetsu).